Here is a 364-residue protein sequence, read N- to C-terminus: C2 calcium-dependent domain-containing protein 4A (364 aa).

Disordered regions lie at residues 118–175 (GSPS…PPRC) and 192–242 (AGRS…RPER). Residues 220–233 (SPGSPTQAPVTSLS) show a composition bias toward polar residues. Residues 254–364 (AGGALRLAAE…ELLLGPLLLL (111 aa)) enclose the C2 domain.

It belongs to the C2CD4 family.

The protein localises to the nucleus. May be involved in inflammatory process. May regulate cell architecture and adhesion. This is C2 calcium-dependent domain-containing protein 4A (C2CD4A) from Bos taurus (Bovine).